Consider the following 152-residue polypeptide: Acidic phospholipase A2 (152 aa).

A signal peptide spans 1–21 (MNPAHLLVLSAVCVSLLGASS). Positions 22 to 27 (IPPQPL) are excised as a propeptide. Intrachain disulfides connect cysteine 38-cysteine 104, cysteine 54-cysteine 151, cysteine 56-cysteine 72, cysteine 71-cysteine 132, cysteine 78-cysteine 125, cysteine 88-cysteine 118, and cysteine 111-cysteine 123. 3 residues coordinate Ca(2+): tyrosine 55, glycine 57, and glycine 59. Histidine 75 is an active-site residue. Aspartate 76 serves as a coordination point for Ca(2+). Residue aspartate 126 is part of the active site.

It belongs to the phospholipase A2 family. Group I subfamily. D49 sub-subfamily. The cofactor is Ca(2+). As to expression, expressed by the venom gland.

It localises to the secreted. It catalyses the reaction a 1,2-diacyl-sn-glycero-3-phosphocholine + H2O = a 1-acyl-sn-glycero-3-phosphocholine + a fatty acid + H(+). Its function is as follows. PLA2 catalyzes the calcium-dependent hydrolysis of the 2-acyl groups in 3-sn-phosphoglycerides. The chain is Acidic phospholipase A2 from Ophiophagus hannah (King cobra).